A 181-amino-acid polypeptide reads, in one-letter code: Adenylate kinase (181 aa).

10-15 (GAGKGT) contacts ATP. The tract at residues 30–59 (STGDLFRANIGEGTPLGIEAKQYIDAGKLV) is NMP. AMP-binding positions include Thr31, Arg36, 57–59 (KLV), 85–88 (GFPR), and Gln92. The segment at 126–132 (SRGRADD) is LID. Arg127 serves as a coordination point for ATP. 2 residues coordinate AMP: Arg129 and Arg140. Gly166 provides a ligand contact to ATP.

The protein belongs to the adenylate kinase family. In terms of assembly, monomer.

It is found in the cytoplasm. It carries out the reaction AMP + ATP = 2 ADP. It participates in purine metabolism; AMP biosynthesis via salvage pathway; AMP from ADP: step 1/1. Functionally, catalyzes the reversible transfer of the terminal phosphate group between ATP and AMP. Plays an important role in cellular energy homeostasis and in adenine nucleotide metabolism. The polypeptide is Adenylate kinase (Corynebacterium glutamicum (strain R)).